Reading from the N-terminus, the 443-residue chain is MSVFALGLNHTTAPVDLRGRFAFTLEQLAPTLQGFRERLTTGQRPGTPEAAILSTCNRTELYCAAEPQLVRPALEWLAGVGGVGADTLSHHAYMLEGGEAARHAFRVASGLDSMVLGEPQILGQMKQAVREADAAGTLGSTLHQLFQRSFAVAKEVRTATEIGTHSISMAAAAVRLAAQLFEDLREIRVLFVGAGEMIELAATHFSARAPARMAVANRTLERGERLASRFGAESIRLSDLPQRLHEFDAVVSCTASSLPLIGLGAVERALKVRRHRPIFMVDLAVPRDIEPEVARLDDVYLYTVDDLSAIVQSGGEKRLAAVAQAEAIIETGVQSFVHWLGQRGTVPLIQALNAQADSWRENELVRARKLLARGESVDAVLDALSRGLTQKMLHGTLAELHASDPAQRAQLATTVSRLFLRGAIPPDAVRPSGPREDDHLDGV.

Substrate-binding positions include 55 to 58 (TCNR), Ser-113, 118 to 120 (EPQ), and Gln-124. Residue Cys-56 is the Nucleophile of the active site. 193-198 (GAGEMI) is a binding site for NADP(+).

This sequence belongs to the glutamyl-tRNA reductase family. As to quaternary structure, homodimer.

The catalysed reaction is (S)-4-amino-5-oxopentanoate + tRNA(Glu) + NADP(+) = L-glutamyl-tRNA(Glu) + NADPH + H(+). Its pathway is porphyrin-containing compound metabolism; protoporphyrin-IX biosynthesis; 5-aminolevulinate from L-glutamyl-tRNA(Glu): step 1/2. It functions in the pathway porphyrin-containing compound metabolism; chlorophyll biosynthesis. Its function is as follows. Catalyzes the NADPH-dependent reduction of glutamyl-tRNA(Glu) to glutamate 1-semialdehyde (GSA). The protein is Glutamyl-tRNA reductase of Methylibium petroleiphilum (strain ATCC BAA-1232 / LMG 22953 / PM1).